The following is a 239-amino-acid chain: Fatty acid metabolism regulator protein (239 aa).

The HTH gntR-type domain occupies 6 to 74 (KGPASFAEKY…HGKPTQVNNF (69 aa)). The H-T-H motif DNA-binding region spans 34–53 (ERELSELIGVTRTTLREVLQ).

As to quaternary structure, homodimer.

The protein localises to the cytoplasm. Its function is as follows. Multifunctional regulator of fatty acid metabolism. This Shewanella denitrificans (strain OS217 / ATCC BAA-1090 / DSM 15013) protein is Fatty acid metabolism regulator protein.